The primary structure comprises 388 residues: Mannitol-1-phosphate 5-dehydrogenase (388 aa).

4 to 15 (AVHFGAGNIGRG) is an NAD(+) binding site.

It belongs to the mannitol dehydrogenase family.

It catalyses the reaction D-mannitol 1-phosphate + NAD(+) = beta-D-fructose 6-phosphate + NADH + H(+). This chain is Mannitol-1-phosphate 5-dehydrogenase, found in Lactococcus lactis subsp. cremoris (strain MG1363).